The sequence spans 208 residues: Large ribosomal subunit protein uL4 (208 aa).

Residues 45-77 (RQGTHKAKERAEIKGSTRKIKKQKGTGTARAGS) are disordered.

The protein belongs to the universal ribosomal protein uL4 family. In terms of assembly, part of the 50S ribosomal subunit.

One of the primary rRNA binding proteins, this protein initially binds near the 5'-end of the 23S rRNA. It is important during the early stages of 50S assembly. It makes multiple contacts with different domains of the 23S rRNA in the assembled 50S subunit and ribosome. Functionally, forms part of the polypeptide exit tunnel. In Christiangramia forsetii (strain DSM 17595 / CGMCC 1.15422 / KT0803) (Gramella forsetii), this protein is Large ribosomal subunit protein uL4.